A 551-amino-acid polypeptide reads, in one-letter code: Arginine--tRNA ligase (551 aa).

The short motif at 125 to 135 (ANPTGPLHIGH) is the 'HIGH' region element.

Belongs to the class-I aminoacyl-tRNA synthetase family. In terms of assembly, monomer.

It is found in the cytoplasm. It carries out the reaction tRNA(Arg) + L-arginine + ATP = L-arginyl-tRNA(Arg) + AMP + diphosphate. This chain is Arginine--tRNA ligase, found in Nitratidesulfovibrio vulgaris (strain DP4) (Desulfovibrio vulgaris).